The chain runs to 452 residues: Bone morphogenetic protein 5 (452 aa).

Residues 1–25 form the signal peptide; the sequence is MHWTVFLLRGIVGFLWSGWVQVGYA. Residues 26-314 constitute a propeptide that is removed on maturation; the sequence is KGGLGDNHVH…ASEVLLRSVR (289 aa). N-linked (GlcNAc...) asparagine glycosylation is found at asparagine 209, asparagine 325, asparagine 343, and asparagine 393. The tract at residues 316–345 is disordered; the sequence is ASKRKNQNRNKSNSHQDPSRMPSAGDYNTS. Disulfide bonds link cysteine 351–cysteine 417, cysteine 380–cysteine 449, and cysteine 384–cysteine 451.

This sequence belongs to the TGF-beta family. In terms of assembly, interacts with ERFE; the interaction inhibits BMP-induced transcription of HAMP.

It localises to the secreted. Its function is as follows. Growth factor of the TGF-beta superfamily that plays essential roles in many developmental processes, including cartilage and bone formation or neurogenesis. Initiates the canonical BMP signaling cascade by associating with type I receptor BMPR1A and type II receptor BMPR2. In turn, BMPR1A propagates signal by phosphorylating SMAD1/5/8 that travel to the nucleus and act as activators and repressors of transcription of target genes. Can also signal through non-canonical pathway such as MAPK p38 signaling cascade to promote chondrogenic differentiation. Promotes the expression of HAMP, this is repressed by its interaction with ERFE. The protein is Bone morphogenetic protein 5 (Bmp5) of Mus musculus (Mouse).